The following is a 310-amino-acid chain: Prostate androgen-regulated mucin-like protein 1 homolog (310 aa).

Positions Met-1–Ser-20 are cleaved as a signal peptide. The Extracellular portion of the chain corresponds to Leu-21–Ser-258. Positions Thr-40–Thr-74 are enriched in polar residues. A disordered region spans residues Thr-40 to Thr-224. 3 N-linked (GlcNAc...) asparagine glycosylation sites follow: Asn-58, Asn-62, and Asn-80. Residues Ser-92 to Asp-103 show a composition bias toward polar residues. The segment covering Ser-150–His-209 has biased composition (low complexity). N-linked (GlcNAc...) asparagine glycosylation occurs at Asn-176. Residues Ile-259–Tyr-279 traverse the membrane as a helical segment. Residues Leu-280 to Ser-310 lie on the Cytoplasmic side of the membrane. Ser-298 is subject to Phosphoserine.

It belongs to the PARM family. Post-translationally, highly N-glycosylated and O-glycosylated.

The protein localises to the cell membrane. It is found in the golgi apparatus membrane. It localises to the endosome membrane. Functionally, may regulate TLP1 expression and telomerase activity, thus enabling certain prostatic cells to resist apoptosis. The polypeptide is Prostate androgen-regulated mucin-like protein 1 homolog (PARM1) (Pongo abelii (Sumatran orangutan)).